The sequence spans 45 residues: Thymosin beta-15A homolog (45 aa).

Residues 19–45 (KKTNTEEKNTLPSKETIEQEKECVKSS) form a disordered region. Residues 21-45 (TNTEEKNTLPSKETIEQEKECVKSS) show a composition bias toward basic and acidic residues.

It belongs to the thymosin beta family.

The protein localises to the cytoplasm. It localises to the cytoskeleton. Its function is as follows. Plays an important role in the organization of the cytoskeleton. Binds to and sequesters actin monomers (G actin) and therefore inhibits actin polymerization. The chain is Thymosin beta-15A homolog from Coturnix japonica (Japanese quail).